The primary structure comprises 451 residues: Tubulin alpha-2 chain (451 aa).

A GTP-binding site is contributed by Gln11. Residue Lys40 is modified to N6-acetyllysine. Residues Glu71, Gly144, Thr145, Thr179, Asn206, and Asn228 each coordinate GTP. Residue Glu71 coordinates Mg(2+). Glu254 is an active-site residue.

Belongs to the tubulin family. As to quaternary structure, dimer of alpha and beta chains. A typical microtubule is a hollow water-filled tube with an outer diameter of 25 nm and an inner diameter of 15 nM. Alpha-beta heterodimers associate head-to-tail to form protofilaments running lengthwise along the microtubule wall with the beta-tubulin subunit facing the microtubule plus end conferring a structural polarity. Microtubules usually have 13 protofilaments but different protofilament numbers can be found in some organisms and specialized cells. The cofactor is Mg(2+). Post-translationally, undergoes a tyrosination/detyrosination cycle, the cyclic removal and re-addition of a C-terminal tyrosine residue by the enzymes tubulin tyrosine carboxypeptidase (TTCP) and tubulin tyrosine ligase (TTL), respectively.

It is found in the cytoplasm. Its subcellular location is the cytoskeleton. The enzyme catalyses GTP + H2O = GDP + phosphate + H(+). Tubulin is the major constituent of microtubules, a cylinder consisting of laterally associated linear protofilaments composed of alpha- and beta-tubulin heterodimers. Microtubules grow by the addition of GTP-tubulin dimers to the microtubule end, where a stabilizing cap forms. Below the cap, tubulin dimers are in GDP-bound state, owing to GTPase activity of alpha-tubulin. The polypeptide is Tubulin alpha-2 chain (TUBA2) (Chlamydomonas reinhardtii (Chlamydomonas smithii)).